A 132-amino-acid polypeptide reads, in one-letter code: Small ribosomal subunit protein uS8 (132 aa).

The protein belongs to the universal ribosomal protein uS8 family. In terms of assembly, part of the 30S ribosomal subunit. Contacts proteins S5 and S12.

Functionally, one of the primary rRNA binding proteins, it binds directly to 16S rRNA central domain where it helps coordinate assembly of the platform of the 30S subunit. This chain is Small ribosomal subunit protein uS8, found in Lysinibacillus sphaericus (strain C3-41).